Reading from the N-terminus, the 365-residue chain is Popy Class I histocompatibility antigen, A-1 alpha chain (365 aa).

Positions 1–24 (MAIMAPRTLLLLLSGALALTQTWA) are cleaved as a signal peptide. Positions 25-114 (GSHSMRYFST…LRGYYNQSDG (90 aa)) are alpha-1. Over 25–308 (GSHSMRYFST…ELSSQPTIPI (284 aa)) the chain is Extracellular. Residue Asn-110 is glycosylated (N-linked (GlcNAc...) asparagine). Positions 115 to 206 (GSHTIQRMFG…ENGKETLQRT (92 aa)) are alpha-2. Cystine bridges form between Cys-125–Cys-188 and Cys-227–Cys-283. Positions 207 to 298 (DAPKTHMTHH…GLPEPLTLRW (92 aa)) are alpha-3. The region spanning 209-297 (PKTHMTHHPV…EGLPEPLTLR (89 aa)) is the Ig-like C1-type domain. The connecting peptide stretch occupies residues 299 to 308 (ELSSQPTIPI). The helical transmembrane segment at 309 to 332 (VGIIAGLVLLGAVITGAVVAAVMW) threads the bilayer. Over 333–365 (RRRNSDRKGGSYSQAASNDSAQGSDVSLTACKV) the chain is Cytoplasmic. The tract at residues 340–365 (KGGSYSQAASNDSAQGSDVSLTACKV) is disordered. Residue Ser-343 is modified to Phosphoserine. Over residues 343-359 (SYSQAASNDSAQGSDVS) the composition is skewed to polar residues. Residue Tyr-344 is modified to Phosphotyrosine. 5 positions are modified to phosphoserine: Ser-345, Ser-349, Ser-352, Ser-356, and Ser-359.

It belongs to the MHC class I family. As to quaternary structure, heterodimer of an alpha chain and a beta chain (beta-2-microglobulin).

It is found in the membrane. In terms of biological role, involved in the presentation of foreign antigens to the immune system. The chain is Popy Class I histocompatibility antigen, A-1 alpha chain from Pongo pygmaeus (Bornean orangutan).